A 196-amino-acid polypeptide reads, in one-letter code: Large ribosomal subunit protein bL25 (196 aa).

It belongs to the bacterial ribosomal protein bL25 family. CTC subfamily. In terms of assembly, part of the 50S ribosomal subunit; part of the 5S rRNA/L5/L18/L25 subcomplex. Contacts the 5S rRNA. Binds to the 5S rRNA independently of L5 and L18.

Its function is as follows. This is one of the proteins that binds to the 5S RNA in the ribosome where it forms part of the central protuberance. The sequence is that of Large ribosomal subunit protein bL25 from Amoebophilus asiaticus (strain 5a2).